A 298-amino-acid polypeptide reads, in one-letter code: tRNA(Met) cytidine acetate ligase (298 aa).

ATP-binding positions include 6-19 (IAEY…HIYQ), Gly100, Asn157, and Arg182.

This sequence belongs to the TmcAL family.

Its subcellular location is the cytoplasm. The catalysed reaction is cytidine(34) in elongator tRNA(Met) + acetate + ATP = N(4)-acetylcytidine(34) in elongator tRNA(Met) + AMP + diphosphate. Its function is as follows. Catalyzes the formation of N(4)-acetylcytidine (ac(4)C) at the wobble position of elongator tRNA(Met), using acetate and ATP as substrates. First activates an acetate ion to form acetyladenylate (Ac-AMP) and then transfers the acetyl group to tRNA to form ac(4)C34. The protein is tRNA(Met) cytidine acetate ligase of Mycoplasmopsis pulmonis (strain UAB CTIP) (Mycoplasma pulmonis).